The sequence spans 379 residues: Chaperone protein DnaJ (379 aa).

Positions 5 to 69 (EYYERLGVDK…QKRAAYDQYG (65 aa)) constitute a J domain. The CR-type zinc finger occupies 141–223 (GVEKQVKYNR…CHGSGHEKVA (83 aa)). Residues Cys154, Cys157, Cys171, Cys174, Cys197, Cys200, and Cys214 each contribute to the Zn(2+) site. CXXCXGXG motif repeat units follow at residues 154 to 161 (CHTCGGSG), 171 to 178 (CHKCGGRG), 197 to 204 (CDVCHGTG), and 211 to 218 (STTCHGSG).

It belongs to the DnaJ family. Homodimer. The cofactor is Zn(2+).

The protein resides in the cytoplasm. In terms of biological role, participates actively in the response to hyperosmotic and heat shock by preventing the aggregation of stress-denatured proteins and by disaggregating proteins, also in an autonomous, DnaK-independent fashion. Unfolded proteins bind initially to DnaJ; upon interaction with the DnaJ-bound protein, DnaK hydrolyzes its bound ATP, resulting in the formation of a stable complex. GrpE releases ADP from DnaK; ATP binding to DnaK triggers the release of the substrate protein, thus completing the reaction cycle. Several rounds of ATP-dependent interactions between DnaJ, DnaK and GrpE are required for fully efficient folding. Also involved, together with DnaK and GrpE, in the DNA replication of plasmids through activation of initiation proteins. The chain is Chaperone protein DnaJ from Lactococcus lactis subsp. cremoris (Streptococcus cremoris).